Here is a 290-residue protein sequence, read N- to C-terminus: 4-hydroxy-tetrahydrodipicolinate synthase (290 aa).

Pyruvate is bound at residue threonine 44. The active-site Proton donor/acceptor is the tyrosine 132. The active-site Schiff-base intermediate with substrate is lysine 160. Isoleucine 202 serves as a coordination point for pyruvate.

This sequence belongs to the DapA family. As to quaternary structure, homotetramer; dimer of dimers.

The protein localises to the cytoplasm. The enzyme catalyses L-aspartate 4-semialdehyde + pyruvate = (2S,4S)-4-hydroxy-2,3,4,5-tetrahydrodipicolinate + H2O + H(+). The protein operates within amino-acid biosynthesis; L-lysine biosynthesis via DAP pathway; (S)-tetrahydrodipicolinate from L-aspartate: step 3/4. Its function is as follows. Catalyzes the condensation of (S)-aspartate-beta-semialdehyde [(S)-ASA] and pyruvate to 4-hydroxy-tetrahydrodipicolinate (HTPA). This chain is 4-hydroxy-tetrahydrodipicolinate synthase, found in Alkaliphilus oremlandii (strain OhILAs) (Clostridium oremlandii (strain OhILAs)).